A 466-amino-acid polypeptide reads, in one-letter code: Asparagine--tRNA ligase (466 aa).

The protein belongs to the class-II aminoacyl-tRNA synthetase family. Homodimer.

It localises to the cytoplasm. It carries out the reaction tRNA(Asn) + L-asparagine + ATP = L-asparaginyl-tRNA(Asn) + AMP + diphosphate + H(+). This is Asparagine--tRNA ligase from Vibrio vulnificus (strain YJ016).